The sequence spans 83 residues: Cell division topological specificity factor (83 aa).

It belongs to the MinE family.

Prevents the cell division inhibition by proteins MinC and MinD at internal division sites while permitting inhibition at polar sites. This ensures cell division at the proper site by restricting the formation of a division septum at the midpoint of the long axis of the cell. The protein is Cell division topological specificity factor of Marinobacter nauticus (strain ATCC 700491 / DSM 11845 / VT8) (Marinobacter aquaeolei).